The sequence spans 509 residues: Zinc finger protein Aiolos (509 aa).

Residues 1 to 19 (MEDIQTNAELKSTQEQSVP) are compositionally biased toward polar residues. The interval 1–86 (MEDIQTNAEL…MGNAEEPEIP (86 aa)) is disordered. Phosphoserine occurs at positions 22 and 42. Positions 56–72 (DSMKVKDEYSERDENVL) are enriched in basic and acidic residues. Glycyl lysine isopeptide (Lys-Gly) (interchain with G-Cter in SUMO2) cross-links involve residues Lys-61, Lys-73, and Lys-100. 3 consecutive C2H2-type zinc fingers follow at residues 118–140 (MNCD…KRSH), 146–168 (FQCN…IKLH), and 174–196 (FKCH…LRTH). The C2H2-type 4; atypical zinc-finger motif lies at 202–224 (YKCEFCGRSYKQRSSLEEHKERC). Residue Lys-245 forms a Glycyl lysine isopeptide (Lys-Gly) (interchain with G-Cter in SUMO2) linkage. Residue Thr-326 is modified to Phosphothreonine. Residues 364 to 394 (IHLPEKSVPSERGLSPNNSGHDSTDTDSNHE) are disordered. The residue at position 378 (Ser-378) is a Phosphoserine. Residues 385–394 (DSTDTDSNHE) show a composition bias toward basic and acidic residues. The C2H2-type 5 zinc finger occupies 452-474 (YRCDHCRVLFLDYVMFTIHMGCH). Positions 452-504 (YRCDHCRVLFLDYVMFTIHMGCHGFRDPFECNMCGYRSHDRYEFSSHIARGEH) are mediates homodimerization and heterodimerization. The C2H2-type 6; atypical zinc finger occupies 480-504 (FECNMCGYRSHDRYEFSSHIARGEH).

It belongs to the Ikaros C2H2-type zinc-finger protein family. In terms of assembly, homodimer. Heterodimer with other IKAROS family members. Interacts with IKZF4 and IKZF5. Interacts with IKZF1. Interacts with HRAS. Interacts with FOXP3; this interaction may be required for silencing target genes and regulating the suppressive activity of FOXP3-positive regulatory T-cells (Treg). Interacts with BCL21L isoform Bcl-X(L); this interaction blocks the anti-apoptotic role of BCL21L. Associates with histone deacetylase complexes containing HDAC1, MTA2 and SIN3A. Phosphorylation on tyrosine residues induced by IL2 is required for dissociation from HRAS and nuclear translocation of IKZF3 in T-cells. Phosphorylation on tyrosine residues induced by IL4 is required for dissociation from Bcl-X(L) in T-cells. Expressed most strongly in peripheral blood leukocytes, the spleen, and the thymus.

The protein resides in the nucleus. The protein localises to the cytoplasm. In terms of biological role, transcription factor that plays an important role in the regulation of lymphocyte differentiation. Plays an essential role in regulation of B-cell differentiation, proliferation and maturation to an effector state. Involved in regulating BCL2 expression and controlling apoptosis in T-cells in an IL2-dependent manner. The polypeptide is Zinc finger protein Aiolos (IKZF3) (Homo sapiens (Human)).